Reading from the N-terminus, the 1705-residue chain is Alpha-protein kinase 3 (1705 aa).

Over residues 1–10 the composition is skewed to low complexity; sequence MGSRRAPSRG. Residues 1–33 form a disordered region; the sequence is MGSRRAPSRGWGAGGRSGAGGDGEDDGPVWIPS. A compositionally biased stretch (gly residues) spans 11 to 21; that stretch reads WGAGGRSGAGG. Residues 77–168 form the Ig-like 1 domain; the sequence is PLFETTLKSR…GIVSCSGVLE (92 aa). Residues 211–221 are compositionally biased toward basic and acidic residues; that stretch reads DTLRKLSPDRF. 5 disordered regions span residues 211-244, 308-749, 792-845, 1082-1145, and 1173-1226; these read DTLR…EPEG, LKEE…GPRA, GPLS…ERPG, GLAS…KFPG, and RAAG…MLEV. Serine 228 is modified (phosphoserine). Over residues 308-342 the composition is skewed to basic and acidic residues; that stretch reads LKEESGAKKKKKDEESKQGLRKPELEKAAQSRRSS. Positions 370 to 382 are enriched in low complexity; it reads PRGRAARGPGSSG. The span at 495-504 shows a compositional bias: polar residues; sequence DSKPISSLSQ. The span at 557 to 579 shows a compositional bias: low complexity; the sequence is TTTAPTMSASSSSDVASIGVSTS. Residues 598-609 are compositionally biased toward polar residues; the sequence is TSANQRTGSKKN. Basic and acidic residues predominate over residues 647–657; it reads ESKRPQSDRSA. A compositionally biased stretch (polar residues) spans 666–676; that stretch reads RAETQLETTQA. The span at 679–700 shows a compositional bias: basic and acidic residues; it reads KIQEDRKAQADKGTQEDRRMQG. Over residues 708-729 the composition is skewed to polar residues; the sequence is KGTQSEGSAPTAMEGQSEQEVA. Pro residues predominate over residues 736–745; sequence SRTPKLPPTA. Residues 829–844 show a composition bias toward basic and acidic residues; it reads AKQEDSPFQCPKEERP. Residues 1120–1131 are compositionally biased toward low complexity; sequence GQAAPGQGPSAE. Serine 1222 carries the post-translational modification Phosphoserine. One can recognise an Ig-like 2 domain in the interval 1274–1362; sequence PQVIRKIRVE…GSASTDFCLS (89 aa). Residues cysteine 1296 and cysteine 1346 are joined by a disulfide bond. Residues 1390-1625 enclose the Alpha-type protein kinase domain; that stretch reads KGLADSGCWG…YCELLGLTPL (236 aa). The interval 1628 to 1705 is disordered; the sequence is PEAAHPQAKA…EEGSKAQGMR (78 aa). Positions 1664 to 1696 are enriched in polar residues; that stretch reads PQGTRKSAPSSKATPQASEPVTTQLLGQPPTQE.

This sequence belongs to the protein kinase superfamily. Alpha-type protein kinase family. ALPK subfamily.

It is found in the nucleus. The catalysed reaction is L-seryl-[protein] + ATP = O-phospho-L-seryl-[protein] + ADP + H(+). The enzyme catalyses L-threonyl-[protein] + ATP = O-phospho-L-threonyl-[protein] + ADP + H(+). Functionally, involved in cardiomyocyte differentiation. This is Alpha-protein kinase 3 from Homo sapiens (Human).